Reading from the N-terminus, the 69-residue chain is Metallothionein-like protein 3 (69 aa).

This sequence belongs to the metallothionein superfamily. Type 15 family. As to expression, expressed in leaf mesophyll cells, root tips, and at low levels in anthers.

Its function is as follows. Metallothioneins have a high content of cysteine residues that bind various heavy metals. Functions as a metal chelator of copper (Cu) and zinc (Zn). Plays a role in Cu homeostasis, specifically in the remobilization of Cu from senescing leaves. The mobilization of Cu from internal sources is important for seed development. In Arabidopsis thaliana (Mouse-ear cress), this protein is Metallothionein-like protein 3.